The sequence spans 517 residues: Glutamate--tRNA ligase (517 aa).

The short motif at 14 to 24 (PSPTGPLHIGG) is the 'HIGH' region element. Positions 266–270 (KLSKR) match the 'KMSKS' region motif. Lysine 269 contributes to the ATP binding site.

Belongs to the class-I aminoacyl-tRNA synthetase family. Glutamate--tRNA ligase type 1 subfamily. In terms of assembly, monomer.

It is found in the cytoplasm. It catalyses the reaction tRNA(Glu) + L-glutamate + ATP = L-glutamyl-tRNA(Glu) + AMP + diphosphate. Catalyzes the attachment of glutamate to tRNA(Glu) in a two-step reaction: glutamate is first activated by ATP to form Glu-AMP and then transferred to the acceptor end of tRNA(Glu). The chain is Glutamate--tRNA ligase from Cytophaga hutchinsonii (strain ATCC 33406 / DSM 1761 / CIP 103989 / NBRC 15051 / NCIMB 9469 / D465).